The following is a 276-amino-acid chain: Formamidopyrimidine-DNA glycosylase (276 aa).

Pro-2 serves as the catalytic Schiff-base intermediate with DNA. The Proton donor role is filled by Glu-3. The active-site Proton donor; for beta-elimination activity is the Lys-58. Residues His-92, Arg-111, and Arg-154 each contribute to the DNA site. Residues 239-273 form an FPG-type zinc finger; the sequence is HAYQRTGDPCERCGTPIQRIVVGQRGTHFCPKCQV. Arg-263 (proton donor; for delta-elimination activity) is an active-site residue.

The protein belongs to the FPG family. In terms of assembly, monomer. Zn(2+) serves as cofactor.

The catalysed reaction is Hydrolysis of DNA containing ring-opened 7-methylguanine residues, releasing 2,6-diamino-4-hydroxy-5-(N-methyl)formamidopyrimidine.. It carries out the reaction 2'-deoxyribonucleotide-(2'-deoxyribose 5'-phosphate)-2'-deoxyribonucleotide-DNA = a 3'-end 2'-deoxyribonucleotide-(2,3-dehydro-2,3-deoxyribose 5'-phosphate)-DNA + a 5'-end 5'-phospho-2'-deoxyribonucleoside-DNA + H(+). In terms of biological role, involved in base excision repair of DNA damaged by oxidation or by mutagenic agents. Acts as a DNA glycosylase that recognizes and removes damaged bases. Has a preference for oxidized purines, such as 7,8-dihydro-8-oxoguanine (8-oxoG). Has AP (apurinic/apyrimidinic) lyase activity and introduces nicks in the DNA strand. Cleaves the DNA backbone by beta-delta elimination to generate a single-strand break at the site of the removed base with both 3'- and 5'-phosphates. In Ligilactobacillus salivarius (strain UCC118) (Lactobacillus salivarius), this protein is Formamidopyrimidine-DNA glycosylase.